The following is an 881-amino-acid chain: MSQEEAESSIIYEEPIDIPLEDDDDEDELEEENSVPLSSQADQENAENESDDSVDNVVGSETPRSVTGLSVDPRDVADEEDEDEEGEDEDEDEDDNDVDNEDENDNDNANENENELGSSRDKRAPPAVQTSKRYKKYPKLDPAKAPPGKKVPLHLLEKRRLGRIKAAEEFAKTLKKIGIEKVETTTLPATGLFQPLMLINQKNYSSDYLKKDDQIFALRDRKFLRNNNTSQISSTNTPDVIDLKSLPHSEASAAPLNDEIDLNDPTATIVIHPGSNSIKIGFPKDDHPVVVPNCVAVPKKWLDLENSEHVENVCLQREQSEEFNNIKSEMEKNFRERMRYYKRKVPGNAHEQVVSFNENSKPEIISEKNDPSPIEWIFDDSKLYYGSDALRCVDEKFVIRKPFRGGSFNVKSPYYKSLAELISDVTKLLEHALNSETLNVKPTKFNQYKVVLVIPDIFKKSHVETFIRVLLTELQFQAVAIIQESLATCYGAGISTSTCVVNIGAAETRIACVDEGTVLEHSAITLDYGGDDITRLFALFLLQSDFPLQDWKIDSKHGWLLAERLKKNFTTFQDADVAVQLYNFMNRSPNQPTEKYEFKLFDEVMLAPLALFFPQIFKLIRTSSHKNSSLEFQLPESRDLFTNELNDWNSLSQFESKEGNLYCDLNDDLKILNRILDAHNIIDQLQDKPENYGNTLKENFAPLEKAIVQSIANASITADVTRMNSFYSNILIVGGSSKIPALDFILTDRINIWRPSLLSSASFPQFYKKLTKEIKDLEGHYVNAPDKTEDENKQILQAQIKEKIVEELEEQHQNIEHQNGNEHIFPVSIIPPPRDMNPALIIWKGASVLAQIKLVEELFITNSDWDVHGSRILQYKCIFTY.

A disordered region spans residues 1–150 (MSQEEAESSI…DPAKAPPGKK (150 aa)). Composition is skewed to acidic residues over residues 14-33 (EPID…EEEN) and 44-54 (ENAENESDDSV). A phosphoserine mark is found at S65 and S70. The span at 77 to 114 (ADEEDEDEEGEDEDEDEDDNDVDNEDENDNDNANENEN) shows a compositional bias: acidic residues. Position 502 to 505 (502 to 505 (NIGA)) interacts with ATP.

It belongs to the actin family. Component of the chromatin-remodeling INO80 complex, at least composed of ARP4, ARP5, ARP8, RVB1, RVB2, TAF14, NHP10, IES1, IES3, IES4, IES6, ACT1, IES2, IES5 and INO80. Exists as monomers and dimers, but the dimer is most probably the biologically relevant form required for stable interactions with histones that exploits the twofold symmetry of the nucleosome core.

Its subcellular location is the nucleus. It is found in the cytoplasm. The protein resides in the cytoskeleton. Probably involved in transcription regulation via its interaction with the INO80 complex, a chromatin remodeling complex. Exhibits low basal ATPase activity, and unable to polymerize. Strongly prefer nucleosomes and H3-H4 tetramers over H2A-H2B dimers, suggesting it may act as a nucleosome recognition module within the complex. The chain is Actin-like protein ARP8 (ARP8) from Saccharomyces cerevisiae (strain ATCC 204508 / S288c) (Baker's yeast).